Here is a 282-residue protein sequence, read N- to C-terminus: NAD(P)H-hydrate epimerase (282 aa).

Residues Met1 to Tyr53 constitute a mitochondrion transit peptide. Position 43 is a phosphoserine; by PKA (Ser43). Residues Ala59–Leu269 enclose the YjeF N-terminal domain. Residue Asn113–Asp117 coordinates (6S)-NADPHX. Position 114 (Asn114) interacts with K(+). Lys138 carries the post-translational modification N6-succinyllysine. Asp179 contacts K(+). (6S)-NADPHX is bound by residues Gly183–Asp189 and Asp212. Residue Ser215 coordinates K(+).

It belongs to the NnrE/AIBP family. Homodimer. Interacts with APOA1 and APOA2. Requires K(+) as cofactor. Undergoes physiological phosphorylation during sperm capacitation, downstream to PKA activation. As to expression, detected in testis and sperm (at protein level). Expressed at high levels in heart, liver, kidney, and testis.

It is found in the mitochondrion. The protein localises to the secreted. The catalysed reaction is (6R)-NADHX = (6S)-NADHX. It carries out the reaction (6R)-NADPHX = (6S)-NADPHX. In terms of biological role, catalyzes the epimerization of the S- and R-forms of NAD(P)HX, a damaged form of NAD(P)H that is a result of enzymatic or heat-dependent hydration. This is a prerequisite for the S-specific NAD(P)H-hydrate dehydratase to allow the repair of both epimers of NAD(P)HX. Accelerates cholesterol efflux from endothelial cells to high-density lipoprotein (HDL) and thereby regulates angiogenesis. This Mus musculus (Mouse) protein is NAD(P)H-hydrate epimerase.